Consider the following 255-residue polypeptide: uncharacterized protein (255 aa).

The next 2 helical transmembrane spans lie at 99-119 and 146-166; these read ISLIYLLTVGMLINVCVITSF and YIGSAFITPALYFTLTLILFL.

The protein resides in the mitochondrion membrane. This is an uncharacterized protein from Schizosaccharomyces pombe (strain 972 / ATCC 24843) (Fission yeast).